The chain runs to 53 residues: HOXB-AS3 peptide (53 aa).

A disordered region spans residues 1 to 53; sequence MPVLPGTQRYPHQRRRFQAAGGGAESGKRGSEEAPGVAWSGSESGRDAATPAW.

As to quaternary structure, interacts with HNRNPA1 (via the RGG-box). Interacts with IGF2BP2.

Its function is as follows. Blocks the binding of HNRNPA1 to the intronic sequences flanking exon 9 of the PKM gene by competitively binding to the HNRNPA1 RGG-box motif. This inhibits inclusion of exon 9 and promotes inclusion of exon 10, suppressing formation of the PKM M2 isoform and promoting production of the M1 isoform. Also suppresses HNRNPA1-mediated processing of microRNA 18a (miR-18a). Promotes MYC stability through interaction with IGF2BP2. In Homo sapiens (Human), this protein is HOXB-AS3 peptide.